The chain runs to 332 residues: Endonuclease 8-like 2 (332 aa).

Pro-2 serves as the catalytic Schiff-base intermediate with DNA. Glu-3 acts as the Proton donor in catalysis. Lys-50 acts as the Proton donor; for beta-elimination activity in catalysis. The residue at position 50 (Lys-50) is an N6-acetyllysine. The interval 56-121 is disordered; the sequence is FDPDEEMGPP…EDDSEYLERD (66 aa). Residue Ser-68 is modified to Phosphoserine. Positions 74-84 are enriched in basic and acidic residues; the sequence is PQKEAQKEGAA. Positions 94-105 are enriched in polar residues; sequence GQKTPDGSSQSA. Residue Lys-154 is modified to N6-acetyllysine. Position 231 (Asn-231) interacts with DNA. An FPG-type zinc finger spans residues 284–320; it reads QVYQREQCPAGHQVMKEAFGPQDGLQRLTWWCPQCQP. Catalysis depends on Arg-310, which acts as the Proton donor; for delta-elimination activity.

Belongs to the FPG family. In terms of assembly, binds EP300.

Its subcellular location is the nucleus. The enzyme catalyses 2'-deoxyribonucleotide-(2'-deoxyribose 5'-phosphate)-2'-deoxyribonucleotide-DNA = a 3'-end 2'-deoxyribonucleotide-(2,3-dehydro-2,3-deoxyribose 5'-phosphate)-DNA + a 5'-end 5'-phospho-2'-deoxyribonucleoside-DNA + H(+). With respect to regulation, acetylation of Lys-50 leads to loss of DNA nicking activity. Involved in base excision repair of DNA damaged by oxidation or by mutagenic agents. Has DNA glycosylase activity towards 5-hydroxyuracil and other oxidized derivatives of cytosine with a preference for mismatched double-stranded DNA (DNA bubbles). Has low or no DNA glycosylase activity towards thymine glycol, 2-hydroxyadenine, hypoxanthine and 8-oxoguanine. Has AP (apurinic/apyrimidinic) lyase activity and introduces nicks in the DNA strand. Cleaves the DNA backbone by beta-delta elimination to generate a single-strand break at the site of the removed base with both 3'- and 5'-phosphates. The chain is Endonuclease 8-like 2 (NEIL2) from Pongo abelii (Sumatran orangutan).